The primary structure comprises 427 residues: Enolase (427 aa).

A (2R)-2-phosphoglycerate-binding site is contributed by Gln163. The active-site Proton donor is the Glu205. Positions 242, 285, and 312 each coordinate Mg(2+). (2R)-2-phosphoglycerate contacts are provided by Lys337, Arg366, Ser367, and Lys388. Lys337 serves as the catalytic Proton acceptor.

The protein belongs to the enolase family. Mg(2+) serves as cofactor.

It is found in the cytoplasm. Its subcellular location is the secreted. It localises to the cell surface. It carries out the reaction (2R)-2-phosphoglycerate = phosphoenolpyruvate + H2O. It participates in carbohydrate degradation; glycolysis; pyruvate from D-glyceraldehyde 3-phosphate: step 4/5. Its function is as follows. Catalyzes the reversible conversion of 2-phosphoglycerate (2-PG) into phosphoenolpyruvate (PEP). It is essential for the degradation of carbohydrates via glycolysis. In Beijerinckia indica subsp. indica (strain ATCC 9039 / DSM 1715 / NCIMB 8712), this protein is Enolase.